Consider the following 592-residue polypeptide: Frizzled-9 (592 aa).

Residues 1–23 (MAVPPLLRGALLLWQLLATGGAA) form the signal peptide. At 24–230 (LEIGRFDPER…EVFWSRRDKD (207 aa)) the chain is on the extracellular side. The FZ domain occupies 35-156 (RGPAPCQAME…NDPHALCMEA (122 aa)). 5 disulfide bridges follow: Cys-40–Cys-101, Cys-48–Cys-94, Cys-85–Cys-123, Cys-112–Cys-153, and Cys-116–Cys-140. Asn-54 is a glycosylation site (N-linked (GlcNAc...) asparagine). The tract at residues 59–173 (PNLLGHTSQG…PTEPHKGLGM (115 aa)) is required for Wnt-activated receptor activity. Asn-159 is a glycosylation site (N-linked (GlcNAc...) asparagine). Residues 231-251 (FALVWMAVWSALCFFSTAFTV) form a helical membrane-spanning segment. Residues 252–267 (FTFLLEPHRFQYPERP) lie on the Cytoplasmic side of the membrane. Residues 268–288 (IIFLSMCYNVYSLAFLIRAVA) traverse the membrane as a helical segment. At 289 to 316 (GAQSVACDQEAGALYVIQEGLENTGCTL) the chain is on the extracellular side. The chain crosses the membrane as a helical span at residues 317-337 (VFLLLYYFGMASSLWWVVLTL). Over 338–356 (TWFLAAGKKWGHEAIEAHG) the chain is Cytoplasmic. Residues 357–377 (SYFHMAAWGLPALKTIVVLTL) traverse the membrane as a helical segment. The Extracellular segment spans residues 378-401 (RKVAGDELTGLCYVASMDPAALTG). The chain crosses the membrane as a helical span at residues 402–422 (FVLVPLSCYLVLGTSFLLTGF). Over 423–448 (VALFHIRKIMKTGGTNTEKLEKLMVK) the chain is Cytoplasmic. A helical transmembrane segment spans residues 449–469 (IGVFSILYTVPATCVIVCYVY). The Extracellular segment spans residues 470–509 (ERLNMDFWRLRATEQPCTAATVPGGRRDCSLPGGSVPTVA). The chain crosses the membrane as a helical span at residues 510–530 (VFMLKIFMSLVVGITSGVWVW). The Cytoplasmic segment spans residues 531–592 (SSKTFQTWQS…DPSLENPTHL (62 aa)). The Lys-Thr-X-X-X-Trp motif, mediates interaction with the PDZ domain of Dvl family members motif lies at 533 to 538 (KTFQTW). Positions 555 to 592 (ACRTPGGYGRGTHCHYKAPTVVLHMTKTDPSLENPTHL) are required for CTNNB1 accumulation and TCF transcription factor activity.

This sequence belongs to the G-protein coupled receptor Fz/Smo family. Post-translationally, ubiquitinated by ZNRF3, leading to its degradation by the proteasome. In terms of tissue distribution, in the embryo, found in the neural tube, trunk skeletal muscle precursors (myotomes), limb skeletal anlagen, craniofacial regions and nephric ducts. In the adult, expression is abundant in heart, brain, testis and skeletal muscle. In the testis, expressed in all spermatogenic cell types. Lower levels in adult lung, liver and kidney. Barely detectable in spleen. Expressed also in chondrocytes.

It is found in the cell membrane. Its function is as follows. Receptor for WNT2 that is coupled to the beta-catenin canonical signaling pathway, which leads to the activation of disheveled proteins, inhibition of GSK-3 kinase, nuclear accumulation of beta-catenin and activation of Wnt target genes. Plays a role in neuromuscular junction (NMJ) assembly by negatively regulating the clustering of acetylcholine receptors (AChR) through the beta-catenin canonical signaling pathway. May play a role in neural progenitor cells (NPCs) viability through the beta-catenin canonical signaling pathway by negatively regulating cell cycle arrest leading to inhibition of neuron apoptotic process. During hippocampal development, regulates neuroblast proliferation and apoptotic cell death. Controls bone formation through non canonical Wnt signaling mediated via ISG15. Positively regulates bone regeneration through non canonical Wnt signaling. This chain is Frizzled-9 (Fzd9), found in Mus musculus (Mouse).